Reading from the N-terminus, the 44-residue chain is Thrombin-like enzyme F202 (44 aa).

Positions 1 to 44 constitute a Peptidase S1 domain; sequence VVGGDECNINEHRFLVALYANSSLLCGGTLINQEWVLIAAHCDR. Cys-26 and Cys-42 are oxidised to a cystine. The active-site Charge relay system is the His-41.

The protein belongs to the peptidase S1 family. Snake venom subfamily. As to quaternary structure, monomer. In terms of processing, contains 6 disulfide bonds. In terms of tissue distribution, expressed by the venom gland.

Its subcellular location is the secreted. Its activity is regulated as follows. Enzyme activity is markedly inhibited by TLCK and PMSF, and moderately by SBTi. Platelet aggregating activity is strongly inhibited by TLCK. Thrombin-like snake venom serine protease that coagulates fibrinogen by inducing a fast degradation of the alpha chain (FGA) from human citrated plasma, and a slow degradation of beta chain (FGB). Potently induces platelet aggregation in both platelet rich plasma and washed platelet preparations in a concentration-dependent fashion. Shows amidolytic activities. The protein is Thrombin-like enzyme F202 of Crotalus durissus cascavella (Northeastern Brazilian rattlesnake).